Consider the following 258-residue polypeptide: Hydroxyacylglutathione hydrolase (258 aa).

7 residues coordinate Zn(2+): histidine 52, histidine 54, aspartate 56, histidine 57, histidine 109, aspartate 126, and histidine 164.

It belongs to the metallo-beta-lactamase superfamily. Glyoxalase II family. In terms of assembly, monomer. Zn(2+) is required as a cofactor.

The catalysed reaction is an S-(2-hydroxyacyl)glutathione + H2O = a 2-hydroxy carboxylate + glutathione + H(+). Its pathway is secondary metabolite metabolism; methylglyoxal degradation; (R)-lactate from methylglyoxal: step 2/2. Thiolesterase that catalyzes the hydrolysis of S-D-lactoyl-glutathione to form glutathione and D-lactic acid. The sequence is that of Hydroxyacylglutathione hydrolase from Xylella fastidiosa (strain 9a5c).